The following is a 362-amino-acid chain: Porin Omp2b (362 aa).

Positions 1 to 22 are cleaved as a signal peptide; sequence MNIKSLLLGSAAALVAASGAQA.

The protein belongs to the alphaproteobacteria porin family. Homotrimer.

The protein localises to the cell outer membrane. In terms of biological role, forms passive diffusion pores that allow small molecular weight hydrophilic materials across the outer membrane. This Brucella canis (strain ATCC 23365 / NCTC 10854 / RM-666) protein is Porin Omp2b (omp2b).